Consider the following 457-residue polypeptide: Glutamate--tRNA ligase 2 (457 aa).

Residues 9–19 (PSPTGYIHIGN) carry the 'HIGH' region motif. The short motif at 250-254 (GLSKR) is the 'KMSKS' region element. Lys-253 is a binding site for ATP.

The protein belongs to the class-I aminoacyl-tRNA synthetase family. Glutamate--tRNA ligase type 1 subfamily. As to quaternary structure, monomer.

It localises to the cytoplasm. It catalyses the reaction tRNA(Glu) + L-glutamate + ATP = L-glutamyl-tRNA(Glu) + AMP + diphosphate. Its function is as follows. Catalyzes the attachment of glutamate to tRNA(Glu) in a two-step reaction: glutamate is first activated by ATP to form Glu-AMP and then transferred to the acceptor end of tRNA(Glu). The polypeptide is Glutamate--tRNA ligase 2 (Brucella melitensis biotype 1 (strain ATCC 23456 / CCUG 17765 / NCTC 10094 / 16M)).